The sequence spans 649 residues: DNA ligase (649 aa).

Residues 62-66 (DSTYD) and 104-105 (ST) contribute to the NAD(+) site. Lys142 functions as the N6-AMP-lysine intermediate in the catalytic mechanism. The NAD(+) site is built by Arg158, Glu189, and Lys301. Residues Cys389, Cys392, Cys405, and Cys411 each contribute to the Zn(2+) site. Positions 569–649 (PGETPVFGKI…LDYLALISTY (81 aa)) constitute a BRCT domain.

Belongs to the NAD-dependent DNA ligase family. LigA subfamily. Mg(2+) is required as a cofactor. Mn(2+) serves as cofactor.

The enzyme catalyses NAD(+) + (deoxyribonucleotide)n-3'-hydroxyl + 5'-phospho-(deoxyribonucleotide)m = (deoxyribonucleotide)n+m + AMP + beta-nicotinamide D-nucleotide.. DNA ligase that catalyzes the formation of phosphodiester linkages between 5'-phosphoryl and 3'-hydroxyl groups in double-stranded DNA using NAD as a coenzyme and as the energy source for the reaction. It is essential for DNA replication and repair of damaged DNA. The sequence is that of DNA ligase from Psychromonas ingrahamii (strain DSM 17664 / CCUG 51855 / 37).